The sequence spans 350 residues: Pleckstrin (350 aa).

Positions 4-101 (KRIREGYLVK…WVRDIKKAIK (98 aa)) constitute a PH 1 domain. At K64 the chain carries N6-acetyllysine. Residues S113 and S117 each carry the phosphoserine; by PKC modification. Positions 136–221 (TEKGIKELNL…NPDAFYYFPD (86 aa)) constitute a DEP domain. The PH 2 domain occupies 244–347 (VIIKQGCLLK…WIRAIQMASR (104 aa)).

Its function is as follows. Major protein kinase C substrate of platelets. This Homo sapiens (Human) protein is Pleckstrin (PLEK).